Reading from the N-terminus, the 206-residue chain is MELELLNEQGQAASKVDAPDTVFGRDYNEALVHQVVVAYQANARQGTRAQKDRQTVKHSTKKPWRQKGTGRARAGMTSSPLWRGGGRIFPNSPEENFSHKVNKKMYRAGMAAIFSQLAREGRLAVVDSIKVETPKTKALAAKFKAMGLESVLVIADEVDENLFLASRNLANVLVIEPRYADPLSLVFYKKVLVTKGAIEKLKEMLA.

The segment at 44 to 77 is disordered; it reads RQGTRAQKDRQTVKHSTKKPWRQKGTGRARAGMT. The span at 56–70 shows a compositional bias: basic residues; the sequence is VKHSTKKPWRQKGTG.

The protein belongs to the universal ribosomal protein uL4 family. In terms of assembly, part of the 50S ribosomal subunit.

One of the primary rRNA binding proteins, this protein initially binds near the 5'-end of the 23S rRNA. It is important during the early stages of 50S assembly. It makes multiple contacts with different domains of the 23S rRNA in the assembled 50S subunit and ribosome. In terms of biological role, forms part of the polypeptide exit tunnel. This chain is Large ribosomal subunit protein uL4, found in Methylibium petroleiphilum (strain ATCC BAA-1232 / LMG 22953 / PM1).